Here is a 251-residue protein sequence, read N- to C-terminus: Cell division protein ZapD (251 aa).

This sequence belongs to the ZapD family. As to quaternary structure, interacts with FtsZ.

It is found in the cytoplasm. Functionally, cell division factor that enhances FtsZ-ring assembly. Directly interacts with FtsZ and promotes bundling of FtsZ protofilaments, with a reduction in FtsZ GTPase activity. This Burkholderia vietnamiensis (strain G4 / LMG 22486) (Burkholderia cepacia (strain R1808)) protein is Cell division protein ZapD.